We begin with the raw amino-acid sequence, 203 residues long: Probable nicotinate-nucleotide adenylyltransferase (203 aa).

Belongs to the NadD family.

It catalyses the reaction nicotinate beta-D-ribonucleotide + ATP + H(+) = deamido-NAD(+) + diphosphate. It participates in cofactor biosynthesis; NAD(+) biosynthesis; deamido-NAD(+) from nicotinate D-ribonucleotide: step 1/1. Its function is as follows. Catalyzes the reversible adenylation of nicotinate mononucleotide (NaMN) to nicotinic acid adenine dinucleotide (NaAD). The chain is Probable nicotinate-nucleotide adenylyltransferase from Clostridium kluyveri (strain ATCC 8527 / DSM 555 / NBRC 12016 / NCIMB 10680 / K1).